The following is a 139-amino-acid chain: D-ribose pyranase (139 aa).

Residue histidine 20 is the Proton donor of the active site. Substrate-binding positions include aspartate 28, histidine 106, and 128 to 130 (YAN).

The protein belongs to the RbsD / FucU family. RbsD subfamily. Homodecamer.

The protein localises to the cytoplasm. The catalysed reaction is beta-D-ribopyranose = beta-D-ribofuranose. It functions in the pathway carbohydrate metabolism; D-ribose degradation; D-ribose 5-phosphate from beta-D-ribopyranose: step 1/2. In terms of biological role, catalyzes the interconversion of beta-pyran and beta-furan forms of D-ribose. The polypeptide is D-ribose pyranase (Shewanella halifaxensis (strain HAW-EB4)).